The primary structure comprises 527 residues: Bifunctional purine biosynthesis protein PurH (527 aa).

One can recognise an MGS-like domain in the interval 9–156; the sequence is MARKPIRRAL…KNHPSVAVVT (148 aa).

This sequence belongs to the PurH family.

It catalyses the reaction (6R)-10-formyltetrahydrofolate + 5-amino-1-(5-phospho-beta-D-ribosyl)imidazole-4-carboxamide = 5-formamido-1-(5-phospho-D-ribosyl)imidazole-4-carboxamide + (6S)-5,6,7,8-tetrahydrofolate. The catalysed reaction is IMP + H2O = 5-formamido-1-(5-phospho-D-ribosyl)imidazole-4-carboxamide. It participates in purine metabolism; IMP biosynthesis via de novo pathway; 5-formamido-1-(5-phospho-D-ribosyl)imidazole-4-carboxamide from 5-amino-1-(5-phospho-D-ribosyl)imidazole-4-carboxamide (10-formyl THF route): step 1/1. Its pathway is purine metabolism; IMP biosynthesis via de novo pathway; IMP from 5-formamido-1-(5-phospho-D-ribosyl)imidazole-4-carboxamide: step 1/1. The chain is Bifunctional purine biosynthesis protein PurH from Mycobacterium leprae (strain Br4923).